A 370-amino-acid polypeptide reads, in one-letter code: Probable butyrate kinase (370 aa).

The protein belongs to the acetokinase family.

The protein resides in the cytoplasm. The enzyme catalyses butanoate + ATP = butanoyl phosphate + ADP. The polypeptide is Probable butyrate kinase (Elusimicrobium minutum (strain Pei191)).